The chain runs to 410 residues: Multifunctional CCA protein (410 aa).

The ATP site is built by Gly-8 and Arg-11. Positions 8 and 11 each coordinate CTP. Mg(2+) contacts are provided by Asp-21 and Asp-23. Residues Arg-91, Arg-138, and Arg-141 each contribute to the ATP site. Arg-91, Arg-138, and Arg-141 together coordinate CTP. The HD domain occupies 229–347 (TGIHQEMVSD…AQLALVCEAD (119 aa)).

This sequence belongs to the tRNA nucleotidyltransferase/poly(A) polymerase family. Bacterial CCA-adding enzyme type 1 subfamily. Monomer. Can also form homodimers and oligomers. Mg(2+) is required as a cofactor. It depends on Ni(2+) as a cofactor.

It carries out the reaction a tRNA precursor + 2 CTP + ATP = a tRNA with a 3' CCA end + 3 diphosphate. The enzyme catalyses a tRNA with a 3' CCA end + 2 CTP + ATP = a tRNA with a 3' CCACCA end + 3 diphosphate. Its function is as follows. Catalyzes the addition and repair of the essential 3'-terminal CCA sequence in tRNAs without using a nucleic acid template. Adds these three nucleotides in the order of C, C, and A to the tRNA nucleotide-73, using CTP and ATP as substrates and producing inorganic pyrophosphate. tRNA 3'-terminal CCA addition is required both for tRNA processing and repair. Also involved in tRNA surveillance by mediating tandem CCA addition to generate a CCACCA at the 3' terminus of unstable tRNAs. While stable tRNAs receive only 3'-terminal CCA, unstable tRNAs are marked with CCACCA and rapidly degraded. The protein is Multifunctional CCA protein of Xanthomonas euvesicatoria pv. vesicatoria (strain 85-10) (Xanthomonas campestris pv. vesicatoria).